Reading from the N-terminus, the 65-residue chain is uncharacterized protein (65 aa).

This is an uncharacterized protein from Acheta domesticus (House cricket).